We begin with the raw amino-acid sequence, 240 residues long: Ribonuclease PH (240 aa).

Phosphate is bound by residues Arg86 and 124–126 (GTR).

This sequence belongs to the RNase PH family. As to quaternary structure, homohexameric ring arranged as a trimer of dimers.

The catalysed reaction is tRNA(n+1) + phosphate = tRNA(n) + a ribonucleoside 5'-diphosphate. In terms of biological role, phosphorolytic 3'-5' exoribonuclease that plays an important role in tRNA 3'-end maturation. Removes nucleotide residues following the 3'-CCA terminus of tRNAs; can also add nucleotides to the ends of RNA molecules by using nucleoside diphosphates as substrates, but this may not be physiologically important. Probably plays a role in initiation of 16S rRNA degradation (leading to ribosome degradation) during starvation. The polypeptide is Ribonuclease PH (Rhodospirillum rubrum (strain ATCC 11170 / ATH 1.1.1 / DSM 467 / LMG 4362 / NCIMB 8255 / S1)).